A 137-amino-acid polypeptide reads, in one-letter code: Methylglyoxal synthase (137 aa).

The MGS-like domain maps to 1–137 (MNIALVAHDQ…EVRKSKSQRI (137 aa)). Residues His8, Lys12, 34–37 (TGTT), and 54–55 (SG) each bind substrate. The active-site Proton donor/acceptor is the Asp60. His87 serves as a coordination point for substrate.

The protein belongs to the methylglyoxal synthase family.

The enzyme catalyses dihydroxyacetone phosphate = methylglyoxal + phosphate. In terms of biological role, catalyzes the formation of methylglyoxal from dihydroxyacetone phosphate. The protein is Methylglyoxal synthase of Clostridioides difficile (strain 630) (Peptoclostridium difficile).